Reading from the N-terminus, the 343-residue chain is Olfactory receptor 6K6 (343 aa).

Residues 1-53 are Extracellular-facing; that stretch reads MKQYSVGNQHSNYRSLLFPFLCSQMTQLTASGNQTMVTEFLFSMFPHAHRGGL. N33 is a glycosylation site (N-linked (GlcNAc...) asparagine). Residues 54–74 traverse the membrane as a helical segment; sequence LFFIPLLLIYGFILTGNLIMF. The Cytoplasmic segment spans residues 75–82; sequence IVIQVGMA. The helical transmembrane segment at 83–103 threads the bilayer; sequence LHTPLYFFISVLSFLEICYTT. Residues 104–127 are Extracellular-facing; it reads TTIPKMLSCLISEQKSISVAGCLL. A disulfide bridge links C125 with C217. The helical transmembrane segment at 128-148 threads the bilayer; it reads QMYFFHSLGITESCVLTAMAI. Over 149–167 the chain is Cytoplasmic; sequence DRYIAICNPLRYPTIMIPK. The chain crosses the membrane as a helical span at residues 168-188; that stretch reads LCIQLTVGSCFCGFLLVLPEI. Topologically, residues 189 to 224 are extracellular; the sequence is AWISTLPFCGSNQIHQIFCDFTPVLSLACTDTFLVV. A helical transmembrane segment spans residues 225–244; sequence IVDAIHAAEIVASFLVIALS. The Cytoplasmic portion of the chain corresponds to 245-264; that stretch reads YIRIIIVILGMHSAEGHHKA. The chain crosses the membrane as a helical span at residues 265–285; it reads FSTCAAHLAVFLLFFGSVAVM. The Extracellular segment spans residues 286 to 298; sequence YLRFSATYSVFWD. The helical transmembrane segment at 299–319 threads the bilayer; the sequence is TAIAVTFVILAPFFNPIIYSL. Residues 320-343 lie on the Cytoplasmic side of the membrane; it reads KNKDMKEAIGRLFHYQKRAGWAGK.

It belongs to the G-protein coupled receptor 1 family.

It localises to the cell membrane. Functionally, odorant receptor. This chain is Olfactory receptor 6K6 (OR6K6), found in Homo sapiens (Human).